Here is a 385-residue protein sequence, read N- to C-terminus: tRNA-specific 2-thiouridylase MnmA (385 aa).

ATP is bound by residues 29–36 and Leu55; that span reads GLSGGVDS. Cys116 functions as the Nucleophile in the catalytic mechanism. Cys116 and Cys225 are disulfide-bonded. Gly141 provides a ligand contact to ATP. Residues 175–177 form an interaction with tRNA region; that stretch reads KDQ. Cys225 functions as the Cysteine persulfide intermediate in the catalytic mechanism. Residues 330–331 form an interaction with tRNA region; sequence RY.

The protein belongs to the MnmA/TRMU family.

Its subcellular location is the cytoplasm. The catalysed reaction is S-sulfanyl-L-cysteinyl-[protein] + uridine(34) in tRNA + AH2 + ATP = 2-thiouridine(34) in tRNA + L-cysteinyl-[protein] + A + AMP + diphosphate + H(+). Functionally, catalyzes the 2-thiolation of uridine at the wobble position (U34) of tRNA, leading to the formation of s(2)U34. The protein is tRNA-specific 2-thiouridylase MnmA of Prochlorococcus marinus (strain MIT 9301).